The primary structure comprises 657 residues: tRNA 5-methylaminomethyl-2-thiouridine biosynthesis bifunctional protein MnmC (657 aa).

The segment at M1–R233 is tRNA (mnm(5)s(2)U34)-methyltransferase. Positions I257–G657 are FAD-dependent cmnm(5)s(2)U34 oxidoreductase.

This sequence in the N-terminal section; belongs to the methyltransferase superfamily. tRNA (mnm(5)s(2)U34)-methyltransferase family. In the C-terminal section; belongs to the DAO family. Requires FAD as cofactor.

The protein localises to the cytoplasm. The catalysed reaction is 5-aminomethyl-2-thiouridine(34) in tRNA + S-adenosyl-L-methionine = 5-methylaminomethyl-2-thiouridine(34) in tRNA + S-adenosyl-L-homocysteine + H(+). Catalyzes the last two steps in the biosynthesis of 5-methylaminomethyl-2-thiouridine (mnm(5)s(2)U) at the wobble position (U34) in tRNA. Catalyzes the FAD-dependent demodification of cmnm(5)s(2)U34 to nm(5)s(2)U34, followed by the transfer of a methyl group from S-adenosyl-L-methionine to nm(5)s(2)U34, to form mnm(5)s(2)U34. This is tRNA 5-methylaminomethyl-2-thiouridine biosynthesis bifunctional protein MnmC from Cupriavidus necator (strain ATCC 17699 / DSM 428 / KCTC 22496 / NCIMB 10442 / H16 / Stanier 337) (Ralstonia eutropha).